Reading from the N-terminus, the 653-residue chain is Large subunit GTPase 1 homolog (653 aa).

Residues 1-47 (MGKKRGTGLGRSLQRQRGSERRGASSWLHASEVVGESGPERRSAVEQ) form a disordered region. Residues 155-439 (WRQLWRVIER…LCDCPGLVMP (285 aa)) enclose the CP-type G domain. A GTP-binding site is contributed by 203 to 206 (NKAD). A compositionally biased stretch (acidic residues) spans 248 to 275 (ADSVADDLSDSEEESSSQEEDVTAEDSA). The segment at 248-323 (ADSVADDLSD…TCSEDEGGDK (76 aa)) is disordered. The segment covering 276 to 291 (ESTSTGSALQTENQCL) has biased composition (polar residues). Positions 293–320 (SDDDSSDEYEDCEDEEEDDWQTCSEDEG) are enriched in acidic residues. Residues 388–395 (GYPNVGKS) and 432–435 (DCPG) contribute to the GTP site. The interval 621-653 (APSAGSVVGKPWKKHGNRNKKEKVRRITKHLEN) is disordered. The segment covering 631–653 (PWKKHGNRNKKEKVRRITKHLEN) has biased composition (basic residues).

This sequence belongs to the TRAFAC class YlqF/YawG GTPase family. LSG1 subfamily.

It is found in the cytoplasm. It localises to the endoplasmic reticulum. The protein resides in the nucleus. Its subcellular location is the cajal body. It catalyses the reaction GTP + H2O = GDP + phosphate + H(+). GTPase required for the XPO1/CRM1-mediated nuclear export of the 60S ribosomal subunit. Probably acts by mediating the release of NMD3 from the 60S ribosomal subunit after export into the cytoplasm. Functionally, functions as a GTPase. May act by mediating the release of NMD3 from the 60S ribosomal subunit after export into the cytoplasm during the 60S ribosomal subunit maturation. The chain is Large subunit GTPase 1 homolog from Gallus gallus (Chicken).